The following is a 214-amino-acid chain: Thymidylate kinase (214 aa).

10–17 (GPDGAGKT) serves as a coordination point for ATP.

This sequence belongs to the thymidylate kinase family.

It carries out the reaction dTMP + ATP = dTDP + ADP. In terms of biological role, phosphorylation of dTMP to form dTDP in both de novo and salvage pathways of dTTP synthesis. This chain is Thymidylate kinase, found in Limosilactobacillus fermentum (strain NBRC 3956 / LMG 18251) (Lactobacillus fermentum).